Consider the following 789-residue polypeptide: Zinc finger protein GLIS1 (789 aa).

2 stretches are compositionally biased toward basic and acidic residues: residues 1-16 (MHCE…RPKE) and 63-74 (RAHDLLRPRSPR). Disordered regions lie at residues 1–29 (MHCE…GPVS), 53–93 (LLPR…YGHS), and 278–304 (PPLP…QEGS). Polar residues predominate over residues 80-92 (KTGSGKVNGSYGH). The segment at 366–391 (QACRWVDCCAAYEQQEELVRHIEKSH) adopts a C2H2-type 1 zinc-finger fold. Residues 400–427 (FTCFWAGCVRRYKPFNARYKLLIHMRVH) form a C2H2-type 2; atypical zinc finger. 3 consecutive C2H2-type zinc fingers follow at residues 433-457 (NKCM…LRSH), 463-487 (YLCQ…QRTH), and 493-517 (YACQ…VKAH). Disordered regions lie at residues 506–529 (DPSS…KKLH) and 573–684 (VYPG…QGYQ). Residues 511-527 (RKHVKAHSAKEQQVRKK) carry the Bipartite nuclear localization signal motif. Residues 648–658 (ASQSQSPGGQS) are compositionally biased toward low complexity.

Belongs to the GLI C2H2-type zinc-finger protein family. As to quaternary structure, interacts with KLF4. Interacts with POU5F1 and/or POU5F1B. Interacts with SOX2. In terms of tissue distribution, in the adult, expressed highly in placenta and kidney and at lower levels in the testis, brain, colon, brown fat tissue and thymus. During embryo development, expressed in the frontal nasal region, branchial arches, somites, vibrissal and hair follicles, limb buds, craniofacial regions, ventral part of the tail, intervertebral disks, teeth, eyes and kidney.

The protein localises to the nucleus. In terms of biological role, acts both as a repressor and an ctivator of transcription. Binds to the consensus sequence 5'-GACCACCCAC-3'. By controlling the expression of genes involved in cell differentiation inhibits the lineage commitment of multipotent cells. Prevents, for instance, the differentiation of multipotent mesenchymal cells into adipocyte and osteoblast. The chain is Zinc finger protein GLIS1 from Mus musculus (Mouse).